The following is a 118-amino-acid chain: MHTLDSLDAESLRTDVPEFWPGDTLKVHVRVVEGNRQRIQVFQGAVIRRQGGGVRETFTVRKVSFGVGVERTFPLHSPIVSKIEIVSRGDVRRAKLYYLRQLRGKAAKIKEKREPVAR.

It belongs to the bacterial ribosomal protein bL19 family.

In terms of biological role, this protein is located at the 30S-50S ribosomal subunit interface and may play a role in the structure and function of the aminoacyl-tRNA binding site. This Frankia casuarinae (strain DSM 45818 / CECT 9043 / HFP020203 / CcI3) protein is Large ribosomal subunit protein bL19.